Consider the following 376-residue polypeptide: Biotin synthase (376 aa).

The region spanning Asn68–Ser292 is the Radical SAM core domain. Residues Cys83, Cys87, and Cys90 each contribute to the [4Fe-4S] cluster site. Residues Cys129, Cys160, Cys220, and Arg296 each coordinate [2Fe-2S] cluster.

This sequence belongs to the radical SAM superfamily. Biotin synthase family. In terms of assembly, homodimer. It depends on [4Fe-4S] cluster as a cofactor. [2Fe-2S] cluster is required as a cofactor.

The catalysed reaction is (4R,5S)-dethiobiotin + (sulfur carrier)-SH + 2 reduced [2Fe-2S]-[ferredoxin] + 2 S-adenosyl-L-methionine = (sulfur carrier)-H + biotin + 2 5'-deoxyadenosine + 2 L-methionine + 2 oxidized [2Fe-2S]-[ferredoxin]. It functions in the pathway cofactor biosynthesis; biotin biosynthesis; biotin from 7,8-diaminononanoate: step 2/2. Catalyzes the conversion of dethiobiotin (DTB) to biotin by the insertion of a sulfur atom into dethiobiotin via a radical-based mechanism. This is Biotin synthase from Psychrobacter cryohalolentis (strain ATCC BAA-1226 / DSM 17306 / VKM B-2378 / K5).